We begin with the raw amino-acid sequence, 273 residues long: Eukaryotic translation initiation factor 3 subunit G-2 (273 aa).

One can recognise an RRM domain in the interval 193–271 (SAVRISNLSE…LILCVEWSKP (79 aa)).

Belongs to the eIF-3 subunit G family. Component of the eukaryotic translation initiation factor 3 (eIF-3) complex. The eIF-3 complex interacts with pix.

Its subcellular location is the cytoplasm. Functionally, RNA-binding component of the eukaryotic translation initiation factor 3 (eIF-3) complex, which is involved in protein synthesis of a specialized repertoire of mRNAs and, together with other initiation factors, stimulates binding of mRNA and methionyl-tRNAi to the 40S ribosome. The eIF-3 complex specifically targets and initiates translation of a subset of mRNAs involved in cell proliferation. This subunit can bind 18S rRNA. The sequence is that of Eukaryotic translation initiation factor 3 subunit G-2 from Drosophila melanogaster (Fruit fly).